Reading from the N-terminus, the 244-residue chain is Small ribosomal subunit protein uS3 (244 aa).

In terms of domain architecture, KH type-2 spans 39-110; that stretch reads IRNFIQKKYS…QVRINVVEVE (72 aa). Residues 221–244 are disordered; sequence GAIPRRKGSRKPQQFEDRSSNENS. Basic and acidic residues predominate over residues 233-244; that stretch reads QQFEDRSSNENS.

It belongs to the universal ribosomal protein uS3 family. Part of the 30S ribosomal subunit. Forms a tight complex with proteins S10 and S14.

Its function is as follows. Binds the lower part of the 30S subunit head. Binds mRNA in the 70S ribosome, positioning it for translation. In Prochlorococcus marinus (strain MIT 9515), this protein is Small ribosomal subunit protein uS3.